Consider the following 151-residue polypeptide: Transmembrane protein 239 (151 aa).

A run of 3 helical transmembrane segments spans residues 61-81, 85-105, and 116-138; these read LWGLEGTLYLLLALMLCHALF, SYLLSSLWPVVAVMWSHLLPA, and ALLFAASFLLLFSTLLSLVGLLT.

It is found in the membrane. This Mus musculus (Mouse) protein is Transmembrane protein 239 (Tmem239).